The chain runs to 340 residues: TD and POZ domain-containing protein 5 (340 aa).

Residues Glu19–Val149 form the MATH domain. The BTB domain maps to Thr188–Gln255.

It belongs to the Tdpoz family.

The protein is TD and POZ domain-containing protein 5 of Mus musculus (Mouse).